The sequence spans 94 residues: Co-chaperonin GroES (94 aa).

The protein belongs to the GroES chaperonin family. As to quaternary structure, heptamer of 7 subunits arranged in a ring. Interacts with the chaperonin GroEL.

Its subcellular location is the cytoplasm. Functionally, together with the chaperonin GroEL, plays an essential role in assisting protein folding. The GroEL-GroES system forms a nano-cage that allows encapsulation of the non-native substrate proteins and provides a physical environment optimized to promote and accelerate protein folding. GroES binds to the apical surface of the GroEL ring, thereby capping the opening of the GroEL channel. The chain is Co-chaperonin GroES from Clostridium kluyveri (strain NBRC 12016).